The following is a 409-amino-acid chain: Tryptophan synthase beta chain (409 aa).

K95 carries the N6-(pyridoxal phosphate)lysine modification.

It belongs to the TrpB family. As to quaternary structure, tetramer of two alpha and two beta chains. The cofactor is pyridoxal 5'-phosphate.

It catalyses the reaction (1S,2R)-1-C-(indol-3-yl)glycerol 3-phosphate + L-serine = D-glyceraldehyde 3-phosphate + L-tryptophan + H2O. It participates in amino-acid biosynthesis; L-tryptophan biosynthesis; L-tryptophan from chorismate: step 5/5. The beta subunit is responsible for the synthesis of L-tryptophan from indole and L-serine. The chain is Tryptophan synthase beta chain from Pseudomonas syringae pv. tomato (strain ATCC BAA-871 / DC3000).